Reading from the N-terminus, the 128-residue chain is MAVLGPKATLAAVFIGPFIVACMLGIGLVYLLQLQVQIFHVKDTIRVTGKPATVSYTTSTPVTPSATTLDGTTYTLIRPTSSYTRVYLGTPRGFDYSTFGPKTLDYVTNLNLILILVVHILLRHCPGI.

The helical transmembrane segment at 12–32 threads the bilayer; the sequence is AVFIGPFIVACMLGIGLVYLL.

This sequence belongs to the coronaviruses ns4/ns4.8 protein family.

The protein resides in the host membrane. The protein is Non-structural protein 4 of Murine coronavirus (strain A59) (MHV-A59).